The chain runs to 390 residues: Tryptophan synthase beta chain (390 aa).

K90 is modified (N6-(pyridoxal phosphate)lysine).

The protein belongs to the TrpB family. In terms of assembly, tetramer of two alpha and two beta chains. Pyridoxal 5'-phosphate is required as a cofactor.

The catalysed reaction is (1S,2R)-1-C-(indol-3-yl)glycerol 3-phosphate + L-serine = D-glyceraldehyde 3-phosphate + L-tryptophan + H2O. It participates in amino-acid biosynthesis; L-tryptophan biosynthesis; L-tryptophan from chorismate: step 5/5. In terms of biological role, the beta subunit is responsible for the synthesis of L-tryptophan from indole and L-serine. In Bacteroides fragilis (strain ATCC 25285 / DSM 2151 / CCUG 4856 / JCM 11019 / LMG 10263 / NCTC 9343 / Onslow / VPI 2553 / EN-2), this protein is Tryptophan synthase beta chain.